The primary structure comprises 122 residues: HetP-like commitment protein Alr3234 (122 aa).

Belongs to the HetP family. In terms of assembly, in bacterial two-hybrid assays interacts robustly with itself, Asl1930, Alr2902 and HetR and weakly with HetP.

Its function is as follows. Delays heterocyst differentiation and commitment when nitrogen is limiting. Interplay between the 4 HetP paralogs controls the timing of commitment to heterocyst formation and its duration. Epistatic analysis show that the 3 paralogs act upstream of hetP to delay commitment (asl1930, alr3234) or inhibit development (alr2902). Asl1930 and Alr3234 must also attenuate the activity of Alr2902. Ectopic expression does not complement a hetP deletion. This Nostoc sp. (strain PCC 7120 / SAG 25.82 / UTEX 2576) protein is HetP-like commitment protein Alr3234.